A 492-amino-acid chain; its full sequence is Homoserine O-acetyltransferase (492 aa).

The region spanning 47 to 352 (NAILVFHALS…KSIYGHDAFL (306 aa)) is the AB hydrolase-1 domain. Residue Ser152 is the Nucleophile of the active site. Arg221 is a substrate binding site. Residues Asp315 and His348 contribute to the active site. Residue Asp349 participates in substrate binding. CBS domains lie at 375–431 (MTKN…ENSI) and 440–492 (MTKN…TITI).

This sequence belongs to the AB hydrolase superfamily. MetX family. As to quaternary structure, homodimer.

The protein localises to the cytoplasm. The enzyme catalyses L-homoserine + acetyl-CoA = O-acetyl-L-homoserine + CoA. Its pathway is amino-acid biosynthesis; L-methionine biosynthesis via de novo pathway; O-acetyl-L-homoserine from L-homoserine: step 1/1. Functionally, transfers an acetyl group from acetyl-CoA to L-homoserine, forming acetyl-L-homoserine. The chain is Homoserine O-acetyltransferase from Methanococcus vannielii (strain ATCC 35089 / DSM 1224 / JCM 13029 / OCM 148 / SB).